The primary structure comprises 409 residues: uncharacterized protein (409 aa).

Transmembrane regions (helical) follow at residues 22–42 (ILII…VIPA), 58–78 (LGII…VVGW), 99–119 (GILG…VFFI), 174–194 (FGAV…MYIA), 217–237 (NTAI…LIFA), 266–286 (SYIF…GPLA), 293–312 (FVIL…LPFA), 316–338 (LAYG…TVVY), 353–373 (LTVG…GALI), and 378–398 (LTPT…AFLL).

It belongs to the major facilitator superfamily.

It is found in the cell membrane. This is an uncharacterized protein from Bacillus subtilis (strain 168).